Consider the following 238-residue polypeptide: Peroxisomal biogenesis factor 11 (238 aa).

This sequence belongs to the peroxin-11 family.

The protein localises to the mitochondrion. It is found in the peroxisome membrane. Its function is as follows. Involved in peroxisomal proliferation. Promotes peroxisome division and biogenesis. This Schizosaccharomyces pombe (strain 972 / ATCC 24843) (Fission yeast) protein is Peroxisomal biogenesis factor 11 (pex11).